A 1245-amino-acid polypeptide reads, in one-letter code: Pesticidal crystal protein Cry5Ba (1245 aa).

Residues 1219–1245 (PLPTDDQSSDGNTTSNTNSNTSMNNNQ) are disordered. The segment covering 1222 to 1245 (TDDQSSDGNTTSNTNSNTSMNNNQ) has biased composition (low complexity).

It belongs to the delta endotoxin family.

Promotes colloidosmotic lysis by binding to the midgut epithelial cells of hymenopteran species. In Bacillus thuringiensis, this protein is Pesticidal crystal protein Cry5Ba (cry5Ba).